Consider the following 469-residue polypeptide: Neuraminidase (469 aa).

Residues 1 to 6 are Intravirion-facing; sequence MNPNQK. A helical transmembrane segment spans residues 7 to 29; that stretch reads IITIGSVSLTIATACSLMQIAIL. Positions 11-33 are involved in apical transport and lipid raft association; that stretch reads GSVSLTIATACSLMQIAILATTV. The Virion surface portion of the chain corresponds to 30-469; the sequence is ATTVTLHFKQ…DGANINFMPI (440 aa). The hypervariable stalk region stretch occupies residues 36-88; that stretch reads HFKQHECDSPASNQVMPCEPIIIERNITEIVYLNNTTIEKEICPEVVEYRNWS. Asn-61, Asn-69, Asn-70, and Asn-86 each carry an N-linked (GlcNAc...) asparagine; by host glycan. A head of neuraminidase region spans residues 91–469; it reads QCQITGFAPF…DGANINFMPI (379 aa). Cystine bridges form between Cys-92–Cys-417, Cys-124–Cys-129, Cys-183–Cys-230, Cys-232–Cys-237, Cys-278–Cys-291, Cys-280–Cys-289, Cys-318–Cys-337, and Cys-421–Cys-447. Substrate is bound at residue Arg-118. N-linked (GlcNAc...) asparagine; by host glycosylation is present at Asn-146. Residue Asp-151 is the Proton donor/acceptor of the active site. Residue Arg-152 participates in substrate binding. Residues Asn-200 and Asn-234 are each glycosylated (N-linked (GlcNAc...) asparagine; by host). Substrate is bound at residue 276 to 277; the sequence is EE. Arg-292 is a substrate binding site. 3 residues coordinate Ca(2+): Asp-293, Gly-297, and Asp-324. The segment at 325–349 is disordered; that stretch reads TPRNDDSSSNSNCRDPNNERGNPGV. Arg-371 serves as a coordination point for substrate. An N-linked (GlcNAc...) asparagine; by host glycan is attached at Asn-402. Tyr-406 serves as the catalytic Nucleophile.

This sequence belongs to the glycosyl hydrolase 34 family. In terms of assembly, homotetramer. Requires Ca(2+) as cofactor. Post-translationally, N-glycosylated.

The protein resides in the virion membrane. Its subcellular location is the host apical cell membrane. The enzyme catalyses Hydrolysis of alpha-(2-&gt;3)-, alpha-(2-&gt;6)-, alpha-(2-&gt;8)- glycosidic linkages of terminal sialic acid residues in oligosaccharides, glycoproteins, glycolipids, colominic acid and synthetic substrates.. With respect to regulation, inhibited by the neuraminidase inhibitors zanamivir (Relenza) and oseltamivir (Tamiflu). These drugs interfere with the release of progeny virus from infected cells and are effective against all influenza strains. Resistance to neuraminidase inhibitors is quite rare. Catalyzes the removal of terminal sialic acid residues from viral and cellular glycoconjugates. Cleaves off the terminal sialic acids on the glycosylated HA during virus budding to facilitate virus release. Additionally helps virus spread through the circulation by further removing sialic acids from the cell surface. These cleavages prevent self-aggregation and ensure the efficient spread of the progeny virus from cell to cell. Otherwise, infection would be limited to one round of replication. Described as a receptor-destroying enzyme because it cleaves a terminal sialic acid from the cellular receptors. May facilitate viral invasion of the upper airways by cleaving the sialic acid moieties on the mucin of the airway epithelial cells. Likely to plays a role in the budding process through its association with lipid rafts during intracellular transport. May additionally display a raft-association independent effect on budding. Plays a role in the determination of host range restriction on replication and virulence. Sialidase activity in late endosome/lysosome traffic seems to enhance virus replication. The chain is Neuraminidase from Aves (Human).